A 204-amino-acid chain; its full sequence is dITP/XTP pyrophosphatase (204 aa).

8-13 contributes to the substrate binding site; that stretch reads SNNAKK. Mg(2+) is bound by residues glutamate 43 and aspartate 72. Aspartate 72 serves as the catalytic Proton acceptor. Residues serine 73, 155 to 158, lysine 180, and 185 to 186 contribute to the substrate site; these read FGYD and HR.

Belongs to the HAM1 NTPase family. As to quaternary structure, homodimer. Mg(2+) serves as cofactor.

It carries out the reaction XTP + H2O = XMP + diphosphate + H(+). The enzyme catalyses dITP + H2O = dIMP + diphosphate + H(+). The catalysed reaction is ITP + H2O = IMP + diphosphate + H(+). Pyrophosphatase that catalyzes the hydrolysis of nucleoside triphosphates to their monophosphate derivatives, with a high preference for the non-canonical purine nucleotides XTP (xanthosine triphosphate), dITP (deoxyinosine triphosphate) and ITP. Seems to function as a house-cleaning enzyme that removes non-canonical purine nucleotides from the nucleotide pool, thus preventing their incorporation into DNA/RNA and avoiding chromosomal lesions. This Cutibacterium acnes (strain DSM 16379 / KPA171202) (Propionibacterium acnes) protein is dITP/XTP pyrophosphatase.